The chain runs to 398 residues: 8-amino-7-oxononanoate synthase (398 aa).

Position 23 (R23) interacts with substrate. 110-111 (GY) contributes to the pyridoxal 5'-phosphate binding site. H135 contacts substrate. The pyridoxal 5'-phosphate site is built by S181, H209, and T237. K240 is subject to N6-(pyridoxal phosphate)lysine. Substrate is bound at residue T354.

The protein belongs to the class-II pyridoxal-phosphate-dependent aminotransferase family. BioF subfamily. Homodimer. It depends on pyridoxal 5'-phosphate as a cofactor.

The enzyme catalyses 6-carboxyhexanoyl-[ACP] + L-alanine + H(+) = (8S)-8-amino-7-oxononanoate + holo-[ACP] + CO2. Its pathway is cofactor biosynthesis; biotin biosynthesis. Catalyzes the decarboxylative condensation of pimeloyl-[acyl-carrier protein] and L-alanine to produce 8-amino-7-oxononanoate (AON), [acyl-carrier protein], and carbon dioxide. The protein is 8-amino-7-oxononanoate synthase of Anaeromyxobacter dehalogenans (strain 2CP-1 / ATCC BAA-258).